We begin with the raw amino-acid sequence, 415 residues long: Tumor necrosis factor receptor superfamily member 3 (415 aa).

An N-terminal signal peptide occupies residues 1–30 (MRLPRASSPCGLAWGPLLLGLSGLLVASQP). Topologically, residues 31–223 (QLVPPYRIEN…NPPEPGAMLL (193 aa)) are extracellular. N-linked (GlcNAc...) asparagine glycosylation occurs at Asn-40. 4 TNFR-Cys repeats span residues 42–81 (TCWD…TVCK), 82–124 (TCPH…KAEC), 125–170 (RCQP…VNCV), and 171–213 (PCKP…TICK). 10 disulfide bridges follow: Cys-43/Cys-58, Cys-59/Cys-72, Cys-62/Cys-80, Cys-83/Cys-98, Cys-101/Cys-116, Cys-104/Cys-124, Cys-126/Cys-132, Cys-139/Cys-150, Cys-142/Cys-169, and Cys-172/Cys-187. Asn-179 carries an N-linked (GlcNAc...) asparagine glycan. The chain crosses the membrane as a helical span at residues 224–244 (LAILLSLVLFLLFTTVLACAW). Over 245 to 415 (MRHPSLCRKL…ETETLGCQDL (171 aa)) the chain is Cytoplasmic. The disordered stretch occupies residues 261-304 (HPEGEESPPCPAPRADPHFPDLAEPLLPMSGDLSPSPAGPPTAP). Ser-315 bears the Phosphoserine mark. The segment at 361 to 399 (LGGTRGPGDPPAPPEPPYPTPEEGAPGPSELSTPYQEDG) is disordered. Pro residues predominate over residues 368–380 (GDPPAPPEPPYPT).

In terms of assembly, self-associates; dimerization and trimerization are promoted by lymphotoxin (LTA(3)). Associates with TRAF3. Associates with TRAF4. Associates with TRAF5.

It is found in the membrane. Functionally, receptor for the heterotrimeric lymphotoxin containing LTA and LTB, and for TNFS14/LIGHT. Activates NF-kappa-B signaling upon stimulation with lymphotoxin. Promotes apoptosis via TRAF3 and TRAF5. May play a role in the development of lymphoid organs. In terms of biological role, (Microbial infection) Plays a role in host defense against Zika virus infection. This Mus musculus (Mouse) protein is Tumor necrosis factor receptor superfamily member 3 (Ltbr).